The following is a 179-amino-acid chain: Protein YjaZ (179 aa).

This chain is Protein YjaZ, found in Escherichia coli (strain K12).